The chain runs to 236 residues: Snake venom serine protease pallase (236 aa).

A Peptidase S1 domain is found at 1–227 (VIGGDECNIN…HLDWIENIIA (227 aa)). Intrachain disulfides connect cysteine 7-cysteine 139, cysteine 26-cysteine 42, cysteine 74-cysteine 234, cysteine 118-cysteine 188, cysteine 150-cysteine 167, and cysteine 178-cysteine 203. Catalysis depends on charge relay system residues histidine 41 and aspartate 86. The active-site Charge relay system is the serine 182.

This sequence belongs to the peptidase S1 family. Snake venom subfamily. Monomer. In terms of tissue distribution, expressed by the venom gland.

It is found in the secreted. Functionally, snake venom serine protease that may act in the hemostasis system of the prey. This Gloydius halys (Chinese water mocassin) protein is Snake venom serine protease pallase.